We begin with the raw amino-acid sequence, 185 residues long: Probable chorismate pyruvate-lyase (185 aa).

The substrate site is built by Arg75, Leu113, and Glu174.

Belongs to the UbiC family.

It localises to the cytoplasm. It catalyses the reaction chorismate = 4-hydroxybenzoate + pyruvate. Its pathway is cofactor biosynthesis; ubiquinone biosynthesis. Removes the pyruvyl group from chorismate, with concomitant aromatization of the ring, to provide 4-hydroxybenzoate (4HB) for the ubiquinone pathway. The sequence is that of Probable chorismate pyruvate-lyase from Aromatoleum aromaticum (strain DSM 19018 / LMG 30748 / EbN1) (Azoarcus sp. (strain EbN1)).